A 1047-amino-acid polypeptide reads, in one-letter code: Probable phospholipid-transporting ATPase IIA (1047 aa).

The residue at position 2 (Thr2) is an N-acetylthreonine. Residues 2 to 69 (TDNIPLQPVR…NQKYNFFTFL (68 aa)) lie on the Cytoplasmic side of the membrane. Residues 70–91 (PGVLFNQFKYFFNLYFLLLACS) traverse the membrane as a helical segment. Topologically, residues 92-96 (QFVPE) are extracellular. A helical transmembrane segment spans residues 97–119 (MRLGALYTYWVPLGFVLAVTVIR). The Cytoplasmic portion of the chain corresponds to 120–303 (EAVEEIRCYV…GLFDLEVNCL (184 aa)). The chain crosses the membrane as a helical span at residues 304–325 (TKILFGALVVVSLVMVALQHFA). The Extracellular portion of the chain corresponds to 326–332 (GRWYLQI). Residues 333–354 (IRFLLLFSNIIPISLRVNLDMG) traverse the membrane as a helical segment. The Cytoplasmic segment spans residues 355–841 (KIVYSWVIRR…GRNSYKRSAA (487 aa)). Asp391 functions as the 4-aspartylphosphate intermediate in the catalytic mechanism. Residues Asp391, Lys392, Thr393, Glu502, Phe544, Lys549, Lys568, Arg597, Thr677, Gly678, Asp679, Arg759, and Lys765 each contribute to the ATP site. Residue Asp391 participates in Mg(2+) binding. Thr393 contributes to the Mg(2+) binding site. A Mg(2+)-binding site is contributed by Asp785. Residues Asn788 and Asp789 each contribute to the ATP site. Asp789 contributes to the Mg(2+) binding site. Residues 842–862 (LSQFVIHRSLCISTMQAVFSS) form a helical membrane-spanning segment. The Extracellular segment spans residues 863-874 (VFYFASVPLYQG). Residues 875-893 (FLIIGYSTIYTMFPVFSLV) form a helical membrane-spanning segment. The Cytoplasmic segment spans residues 894 to 923 (LDKDVKSEVAMLYPELYKDLLKGRPLSYKT). Residues 924–942 (FLIWVLISIYQGSTIMYGA) traverse the membrane as a helical segment. Residues 943 to 949 (LLLFESE) lie on the Extracellular side of the membrane. A helical transmembrane segment spans residues 950–972 (FVHIVAISFTSLILTELLMVALT). Over 973–978 (IQTWHW) the chain is Cytoplasmic. Residues 979–999 (LMTVAELLSLACYIASLVFLH) form a helical membrane-spanning segment. The Extracellular portion of the chain corresponds to 1000–1006 (EFIDVYF). A helical membrane pass occupies residues 1007–1030 (IATLSFLWKVSVITLVSCLPLYVL). Residues 1031–1047 (KYLRRRFSPPSYSKLTS) are Cytoplasmic-facing.

The protein belongs to the cation transport ATPase (P-type) (TC 3.A.3) family. Type IV subfamily. Heterotrimer with MON2 and DOP1B; this complex regulates SNX3-retromer mediated endosomal sorting of WLS. Interacts with RAB5A and RAB11A. Mg(2+) serves as cofactor.

The protein localises to the early endosome membrane. It localises to the recycling endosome membrane. Its subcellular location is the late endosome membrane. The protein resides in the golgi apparatus. It is found in the trans-Golgi network membrane. The protein localises to the cell membrane. The catalysed reaction is ATP + H2O + phospholipidSide 1 = ADP + phosphate + phospholipidSide 2.. In terms of biological role, plays a role in regulating membrane trafficking of cargo proteins, namely endosome to plasma membrane recycling, probably acting through RAB5 and RAB11 activation. Also involved in endosome to trans-Golgi network retrograde transport. In complex with MON2 and DOP1B, regulates SNX3 retromer-mediated endosomal sorting of WLS, a transporter of Wnt morphogens in developing tissues. Participates in the formation of endosomal carriers that direct WLS trafficking back to Golgi, away from lysosomal degradation. Appears to be implicated in intercellular communication by negatively regulating the release of exosomes. The flippase activity towards membrane lipids and its role in membrane asymmetry remains to be proved. Required for the maintenance of neurite morphology and synaptic transmission. The sequence is that of Probable phospholipid-transporting ATPase IIA from Homo sapiens (Human).